The chain runs to 101 residues: Thioredoxin 1 (101 aa).

In terms of domain architecture, Thioredoxin spans 2-101; the sequence is AQTLDDLIRT…MRQEVLKAIG (100 aa). Cysteines 25 and 28 form a disulfide.

It belongs to the thioredoxin family.

Its function is as follows. Participates in various redox reactions through the reversible oxidation of its active center dithiol to a disulfide and catalyzes dithiol-disulfide exchange reactions. This is Thioredoxin 1 (trx1) from Chlorobaculum tepidum (strain ATCC 49652 / DSM 12025 / NBRC 103806 / TLS) (Chlorobium tepidum).